The chain runs to 502 residues: Zinc finger protein 488 (502 aa).

Residues 8 to 130 (RSLWTNDSKI…EGEELLVWYD (123 aa)) enclose the SET domain. Y129 contributes to the S-adenosyl-L-methionine binding site. The C2H2-type 1; atypical zinc finger occupies 151 to 174 (YTCTRCGQAFKNENPFLAHCRFLC). Disordered stretches follow at residues 267–303 (SEPTDNAQTNESKISKNSAFTEVRKAPEPSNPEKSSR) and 338–361 (PSKRALAEAQNPSPPDTDNSLDSF). The segment covering 269–286 (PTDNAQTNESKISKNSAF) has biased composition (polar residues). 2 C2H2-type zinc fingers span residues 438–460 (NWCAKCNLSFRMTSDLVFHMRSH) and 479–501 (LTCPICHEYFRERHHLSRHMTSH).

It belongs to the krueppel C2H2-type zinc-finger protein family. Expressed in pMN progenitors and oligodendrocyte lineage cells in the embryo with expression declining in oligodendrocytes undergoing differentiation.

The protein resides in the nucleus. Its function is as follows. Transcriptional repressor. May have histone methyltransferase activity. Negatively regulates shh signaling activity in pMN progenitor cells which prevents their switch from motor neuron to oligodendrocyte precursor cell production. Independently of shh activity, also regulates oligodendrocyte formation. This is Zinc finger protein 488 from Danio rerio (Zebrafish).